Here is a 92-residue protein sequence, read N- to C-terminus: Small ribosomal subunit protein uS19 (92 aa).

The protein belongs to the universal ribosomal protein uS19 family.

Its function is as follows. Protein S19 forms a complex with S13 that binds strongly to the 16S ribosomal RNA. This Staphylococcus aureus (strain Mu3 / ATCC 700698) protein is Small ribosomal subunit protein uS19.